The primary structure comprises 100 residues: MAKVNIKPLEDKILVQANEAETTTASGLVIPDTAKEKPQEGTVVAVGPGRWDDDGAKRIPLDVSEGDTVIYSKYGGTEIKYNGEEYLILSARDVLAVVSK.

Belongs to the GroES chaperonin family. In terms of assembly, heptamer of 7 subunits arranged in a ring. Interacts with the chaperonin GroEL.

It localises to the cytoplasm. In terms of biological role, together with the chaperonin GroEL, plays an essential role in assisting protein folding. The GroEL-GroES system forms a nano-cage that allows encapsulation of the non-native substrate proteins and provides a physical environment optimized to promote and accelerate protein folding. GroES binds to the apical surface of the GroEL ring, thereby capping the opening of the GroEL channel. The sequence is that of Co-chaperonin GroES from Mycolicibacterium paratuberculosis (strain ATCC BAA-968 / K-10) (Mycobacterium paratuberculosis).